The primary structure comprises 286 residues: Bifunctional protein FolD (286 aa).

Residues 165-167 (GRS), Ser190, and Val231 each bind NADP(+).

It belongs to the tetrahydrofolate dehydrogenase/cyclohydrolase family. In terms of assembly, homodimer.

The enzyme catalyses (6R)-5,10-methylene-5,6,7,8-tetrahydrofolate + NADP(+) = (6R)-5,10-methenyltetrahydrofolate + NADPH. It catalyses the reaction (6R)-5,10-methenyltetrahydrofolate + H2O = (6R)-10-formyltetrahydrofolate + H(+). It functions in the pathway one-carbon metabolism; tetrahydrofolate interconversion. Catalyzes the oxidation of 5,10-methylenetetrahydrofolate to 5,10-methenyltetrahydrofolate and then the hydrolysis of 5,10-methenyltetrahydrofolate to 10-formyltetrahydrofolate. This chain is Bifunctional protein FolD, found in Bacillus cereus (strain ATCC 14579 / DSM 31 / CCUG 7414 / JCM 2152 / NBRC 15305 / NCIMB 9373 / NCTC 2599 / NRRL B-3711).